The sequence spans 207 residues: LexA repressor (207 aa).

The segment at residues 28–48 is a DNA-binding region (H-T-H motif); that stretch reads VREIGEAVGLASSSTVHGHLA. Catalysis depends on for autocatalytic cleavage activity residues S129 and K167.

This sequence belongs to the peptidase S24 family. As to quaternary structure, homodimer.

The enzyme catalyses Hydrolysis of Ala-|-Gly bond in repressor LexA.. In terms of biological role, represses a number of genes involved in the response to DNA damage (SOS response), including recA and lexA. In the presence of single-stranded DNA, RecA interacts with LexA causing an autocatalytic cleavage which disrupts the DNA-binding part of LexA, leading to derepression of the SOS regulon and eventually DNA repair. In Bacillus licheniformis (strain ATCC 14580 / DSM 13 / JCM 2505 / CCUG 7422 / NBRC 12200 / NCIMB 9375 / NCTC 10341 / NRRL NRS-1264 / Gibson 46), this protein is LexA repressor.